The following is a 370-amino-acid chain: Cobalt-precorrin-5B C(1)-methyltransferase (370 aa).

The protein belongs to the CbiD family.

The enzyme catalyses Co-precorrin-5B + S-adenosyl-L-methionine = Co-precorrin-6A + S-adenosyl-L-homocysteine. Its pathway is cofactor biosynthesis; adenosylcobalamin biosynthesis; cob(II)yrinate a,c-diamide from sirohydrochlorin (anaerobic route): step 6/10. Functionally, catalyzes the methylation of C-1 in cobalt-precorrin-5B to form cobalt-precorrin-6A. This Nostoc sp. (strain PCC 7120 / SAG 25.82 / UTEX 2576) protein is Cobalt-precorrin-5B C(1)-methyltransferase.